The chain runs to 204 residues: Large ribosomal subunit protein eL15 (204 aa).

It belongs to the eukaryotic ribosomal protein eL15 family. As to quaternary structure, component of the large ribosomal subunit.

It localises to the cytoplasm. In terms of biological role, component of the large ribosomal subunit. The ribosome is a large ribonucleoprotein complex responsible for the synthesis of proteins in the cell. The sequence is that of Large ribosomal subunit protein eL15 (rpl15) from Siniperca knerii (Big-eye mandarin fish).